We begin with the raw amino-acid sequence, 557 residues long: Formate--tetrahydrofolate ligase (557 aa).

67 to 74 lines the ATP pocket; sequence TPAGEGKS.

The protein belongs to the formate--tetrahydrofolate ligase family.

The catalysed reaction is (6S)-5,6,7,8-tetrahydrofolate + formate + ATP = (6R)-10-formyltetrahydrofolate + ADP + phosphate. The protein operates within one-carbon metabolism; tetrahydrofolate interconversion. This Lacticaseibacillus paracasei (strain ATCC 334 / BCRC 17002 / CCUG 31169 / CIP 107868 / KCTC 3260 / NRRL B-441) (Lactobacillus paracasei) protein is Formate--tetrahydrofolate ligase.